A 606-amino-acid chain; its full sequence is Putative amino acid transporter AAT1 (606 aa).

Residues 1–156 (MNKKYGTSSN…DEEGTNKPKR (156 aa)) form a disordered region. 2 stretches are compositionally biased toward basic and acidic residues: residues 12 to 25 (HDNK…ADKN) and 72 to 89 (SDKK…ESSK). The span at 140-149 (SDGDYTNDEE) shows a compositional bias: acidic residues. Helical transmembrane passes span 175–194 (TVLF…PYVF), 200–225 (ILSI…TSSL), 246–271 (TIID…SNFL), 283–301 (LFTN…ILPI), 313–332 (FLIF…GLQT), 352–372 (HFFK…NACF), 393–412 (VILQ…FSFL), 428–449 (VSIL…PLNF), 522–539 (MWIS…ACKV), 545–567 (VIGI…LIYY), and 579–605 (RYST…LNLI).

Belongs to the amino acid/polyamine transporter 2 family.

It is found in the vacuole membrane. Putative amino acid transporter. Probably transports tryptophan. Involved in maintaining the osmotic homeostasis of the digestive vacuole. Important for the timely development and growth of the asexual-stage parasites and male gametocyte maturation. This is Putative amino acid transporter AAT1 from Plasmodium falciparum (isolate 3D7).